The primary structure comprises 231 residues: Protein FMP52, mitochondrial (231 aa).

Residues 1-44 (MNGLVLGATGLCGGGFLRHAQEAPQFSKVYAILRRELPFPATDK) constitute a mitochondrion transit peptide.

Belongs to the FMP52 family.

Its subcellular location is the mitochondrion outer membrane. The sequence is that of Protein FMP52, mitochondrial (FMP52) from Saccharomyces cerevisiae (strain ATCC 204508 / S288c) (Baker's yeast).